The following is a 268-amino-acid chain: Tryptophan synthase alpha chain (268 aa).

Residues E49 and D60 each act as proton acceptor in the active site.

It belongs to the TrpA family. In terms of assembly, tetramer of two alpha and two beta chains.

It carries out the reaction (1S,2R)-1-C-(indol-3-yl)glycerol 3-phosphate + L-serine = D-glyceraldehyde 3-phosphate + L-tryptophan + H2O. It functions in the pathway amino-acid biosynthesis; L-tryptophan biosynthesis; L-tryptophan from chorismate: step 5/5. Functionally, the alpha subunit is responsible for the aldol cleavage of indoleglycerol phosphate to indole and glyceraldehyde 3-phosphate. In Serratia proteamaculans (strain 568), this protein is Tryptophan synthase alpha chain.